The primary structure comprises 329 residues: MQFIDQARITVRGGRGGDGIAAFRREKYVPAGGPSGGDGGCGAPVVLEADSNLQTLLDFKYKRLFAADDGRRGGPNKCTGASGKDLVIKVPCGTEVRHLRTGILLGDLTAPGERLTVAFGGRGGLGNAHYLSNRNRAPEKFTEGREGEEWPLQLELKLLAEVGIIGLPNAGKSTLIAVLSAARPKIADYPFTTLVPNLGVVRRPSGDGTVFADIPGLIEGAAQGSGLGHDFLRHIERTRLLIHLVDAGSEDPVADLNVVQQELEAYGHGLVDRPRLLVINKQELVSEDDLPKLQQELKEASGRPVLCISAAMGTNLDQLLAETWVELGV.

An Obg domain is found at 1 to 159 (MQFIDQARIT…WPLQLELKLL (159 aa)). Positions 160-328 (AEVGIIGLPN…LLAETWVELG (169 aa)) constitute an OBG-type G domain. Residues 166–173 (GLPNAGKS), 191–195 (FTTLV), 213–216 (DIPG), 280–283 (NKQE), and 309–311 (SAA) contribute to the ATP site. Mg(2+) is bound by residues Ser173 and Thr193.

This sequence belongs to the TRAFAC class OBG-HflX-like GTPase superfamily. OBG GTPase family. As to quaternary structure, monomer. The cofactor is Mg(2+).

The protein localises to the cytoplasm. Its function is as follows. An essential GTPase which binds GTP, GDP and possibly (p)ppGpp with moderate affinity, with high nucleotide exchange rates and a fairly low GTP hydrolysis rate. Plays a role in control of the cell cycle, stress response, ribosome biogenesis and in those bacteria that undergo differentiation, in morphogenesis control. This Synechococcus sp. (strain CC9605) protein is GTPase Obg.